The sequence spans 418 residues: Actin-related protein 3B (418 aa).

It belongs to the actin family. ARP3 subfamily. As to quaternary structure, interacts with the Arp2/3 complex composed of ARP2, ARP3, ARPC1B, ARPC1B/p41-ARC, ARPC2/p34-ARC, ARPC3/p21-ARC, ARPC4/p20-ARC and ARPC5/p16-ARC.

The protein localises to the cytoplasm. It is found in the cytoskeleton. Its subcellular location is the cell projection. Its function is as follows. Plays a role in the organization of the actin cytoskeleton. May function as ATP-binding component of the Arp2/3 complex which is involved in regulation of actin polymerization and together with an activating nucleation-promoting factor (NPF) mediates the formation of branched actin networks. May decrease the metastatic potential of tumors. The protein is Actin-related protein 3B (Actr3b) of Mus musculus (Mouse).